The sequence spans 149 residues: MVYKTKLGEMEISDESIFTFEKGIPGFEHLRKFALVFPQETFPIGWLLSLEDPEVGLPVVDPKLVRADYDPVVLSEDLEEIEAENQEALLFFCVLTIPPGKPEKTTINLRAPIILNQKKKKGIQTILENEDYQLRHLLSEEMERSKTVV.

This sequence belongs to the FliW family. In terms of assembly, interacts with translational regulator CsrA and flagellin(s).

It is found in the cytoplasm. Functionally, acts as an anti-CsrA protein, binds CsrA and prevents it from repressing translation of its target genes, one of which is flagellin. Binds to flagellin and participates in the assembly of the flagellum. This Thermotoga petrophila (strain ATCC BAA-488 / DSM 13995 / JCM 10881 / RKU-1) protein is Flagellar assembly factor FliW.